Here is a 129-residue protein sequence, read N- to C-terminus: Small ribosomal subunit protein uS11 (129 aa).

The protein belongs to the universal ribosomal protein uS11 family. As to quaternary structure, part of the 30S ribosomal subunit. Interacts with proteins S7 and S18. Binds to IF-3.

In terms of biological role, located on the platform of the 30S subunit, it bridges several disparate RNA helices of the 16S rRNA. Forms part of the Shine-Dalgarno cleft in the 70S ribosome. This is Small ribosomal subunit protein uS11 from Tolumonas auensis (strain DSM 9187 / NBRC 110442 / TA 4).